We begin with the raw amino-acid sequence, 503 residues long: Cytochrome P450 3A9 (503 aa).

C442 is a heme binding site.

It belongs to the cytochrome P450 family. It depends on heme as a cofactor. Mainly expressed in olfactory epithelium.

Its subcellular location is the endoplasmic reticulum membrane. It localises to the microsome membrane. The catalysed reaction is an organic molecule + reduced [NADPH--hemoprotein reductase] + O2 = an alcohol + oxidized [NADPH--hemoprotein reductase] + H2O + H(+). Functionally, this isozyme seems to be implicated in olfaction. Active in the demethylation of erythromycin as well as benzphetamine. In Rattus norvegicus (Rat), this protein is Cytochrome P450 3A9 (Cyp3a9).